A 242-amino-acid polypeptide reads, in one-letter code: uncharacterized protein (242 aa).

2 helical membrane-spanning segments follow: residues 4 to 24 and 34 to 54; these read NYQVSLIFSVIYVVTNSYYVV and LLFGSFYLTMEVFQTLQWLFG. An N-linked (GlcNAc...) asparagine; by host glycan is attached at N73. 3 helical membrane-spanning segments follow: residues 74 to 94, 106 to 126, and 162 to 182; these read YTIVAFILIWLQPILFSVIGY, VLTVLNCFVFFYGLKLLYGGF, and LDVFPNHLTYIILCIISFVMY. Residue N185 is glycosylated (N-linked (GlcNAc...) asparagine; by host). 2 helical membrane-spanning segments follow: residues 189–209 and 217–237; these read VIGLGWLLSLIVTKLLLAPTL and CLLSIIANLLIVAYVHISTGI.

The protein resides in the membrane. This is an uncharacterized protein from Acanthamoeba polyphaga mimivirus (APMV).